The following is a 419-amino-acid chain: Serine--tRNA ligase (419 aa).

Residue 226-228 (TSE) coordinates L-serine. Residues 257-259 (RRE) and Val273 each bind ATP. Glu280 provides a ligand contact to L-serine. 344–347 (ELTS) serves as a coordination point for ATP. L-serine is bound at residue Thr379.

It belongs to the class-II aminoacyl-tRNA synthetase family. Type-1 seryl-tRNA synthetase subfamily. In terms of assembly, homodimer. The tRNA molecule binds across the dimer.

It is found in the cytoplasm. It carries out the reaction tRNA(Ser) + L-serine + ATP = L-seryl-tRNA(Ser) + AMP + diphosphate + H(+). The catalysed reaction is tRNA(Sec) + L-serine + ATP = L-seryl-tRNA(Sec) + AMP + diphosphate + H(+). Its pathway is aminoacyl-tRNA biosynthesis; selenocysteinyl-tRNA(Sec) biosynthesis; L-seryl-tRNA(Sec) from L-serine and tRNA(Sec): step 1/1. Functionally, catalyzes the attachment of serine to tRNA(Ser). Is also able to aminoacylate tRNA(Sec) with serine, to form the misacylated tRNA L-seryl-tRNA(Sec), which will be further converted into selenocysteinyl-tRNA(Sec). This chain is Serine--tRNA ligase, found in Corynebacterium diphtheriae (strain ATCC 700971 / NCTC 13129 / Biotype gravis).